Consider the following 63-residue polypeptide: Large ribosomal subunit protein uL30 (63 aa).

The protein belongs to the universal ribosomal protein uL30 family. In terms of assembly, part of the 50S ribosomal subunit.

The polypeptide is Large ribosomal subunit protein uL30 (Rhodospirillum rubrum (strain ATCC 11170 / ATH 1.1.1 / DSM 467 / LMG 4362 / NCIMB 8255 / S1)).